The sequence spans 677 residues: Secretogranin-1 (677 aa).

The first 20 residues, 1 to 20 (MQPAMLLGLLGAAALAAVSS), serve as a signal peptide directing secretion. A disulfide bond links Cys36 and Cys57. Disordered regions lie at residues 63-505 (KSGK…RQYE) and 531-558 (NSDFEKRGNPDDSFLEDEGEDRNGVTLT). Residues 64–90 (SGKEVKGEEKGENQNSKFEVRLLRDPA) are compositionally biased toward basic and acidic residues. Ser93, Ser99, and Ser100 each carry phosphoserine. O-linked (Xyl...) (chondroitin sulfate) serine glycosylation occurs at Ser93. The O-linked (GalNAc...) threonine glycan is linked to Thr115. Positions 118 to 133 (GNEKWTEGGGHSREGV) are enriched in basic and acidic residues. 4 positions are modified to phosphoserine: Ser129, Ser147, Ser190, and Ser220. 2 stretches are compositionally biased toward basic and acidic residues: residues 148–192 (KEAK…DSGE) and 200–249 (KRSE…KPQE). Ser237 carries an O-linked (Xyl...) (chondroitin sulfate) serine glycan. A compositionally biased stretch (acidic residues) spans 251–280 (TDQDQSQEESQEGEEGEEGEEGEEGEEDSA). Phosphoserine occurs at positions 256, 260, 300, 301, 318, and 342. The span at 306–322 (PLSEERRPSPKESKEAD) shows a compositional bias: basic and acidic residues. Residue Tyr348 is modified to Sulfotyrosine. 2 stretches are compositionally biased toward basic and acidic residues: residues 363–409 (RGSE…ERSY) and 421–455 (GREPGAHSALDTREEKRLLDEGHYPVRESPIDTAK). Residues Ser365, Ser375, and Ser378 each carry the phosphoserine modification. Tyr472 is modified (sulfotyrosine). A compositionally biased stretch (basic and acidic residues) spans 491–504 (EESREEVRFPDRQY). 3 positions are modified to phosphoserine: Ser493, Ser532, and Ser543. A sulfotyrosine mark is found at Tyr566 and Tyr624. The disordered stretch occupies residues 622–646 (DFYDSEEQMGPHQEANDEKARADQR). At Ser626 the chain carries Phosphoserine. Over residues 635–646 (EANDEKARADQR) the composition is skewed to basic and acidic residues.

Belongs to the chromogranin/secretogranin protein family. In terms of assembly, interacts with ITPR1 in the secretory granules.

The protein localises to the secreted. Functionally, secretogranin-1 is a neuroendocrine secretory granule protein, which may be the precursor for other biologically active peptides. In Mus musculus (Mouse), this protein is Secretogranin-1 (Chgb).